Reading from the N-terminus, the 858-residue chain is DNA mismatch repair protein MutS (858 aa).

613-620 (GPNMAGKS) contributes to the ATP binding site.

The protein belongs to the DNA mismatch repair MutS family.

In terms of biological role, this protein is involved in the repair of mismatches in DNA. It is possible that it carries out the mismatch recognition step. This protein has a weak ATPase activity. This Dehalococcoides mccartyi (strain CBDB1) protein is DNA mismatch repair protein MutS.